The chain runs to 212 residues: Pyridoxine/pyridoxamine 5'-phosphate oxidase (212 aa).

Residues 8 to 11 and K66 contribute to the substrate site; that span reads RRTY. FMN-binding positions include 61–66, 76–77, R82, K83, and Q105; these read RIVLLK and FT. Positions 123, 127, and 131 each coordinate substrate. Residues 140–141 and W184 each bind FMN; that span reads QS. Residue 190-192 coordinates substrate; the sequence is RLH. R194 serves as a coordination point for FMN.

The protein belongs to the pyridoxamine 5'-phosphate oxidase family. In terms of assembly, homodimer. The cofactor is FMN.

It catalyses the reaction pyridoxamine 5'-phosphate + O2 + H2O = pyridoxal 5'-phosphate + H2O2 + NH4(+). It carries out the reaction pyridoxine 5'-phosphate + O2 = pyridoxal 5'-phosphate + H2O2. It participates in cofactor metabolism; pyridoxal 5'-phosphate salvage; pyridoxal 5'-phosphate from pyridoxamine 5'-phosphate: step 1/1. Its pathway is cofactor metabolism; pyridoxal 5'-phosphate salvage; pyridoxal 5'-phosphate from pyridoxine 5'-phosphate: step 1/1. Catalyzes the oxidation of either pyridoxine 5'-phosphate (PNP) or pyridoxamine 5'-phosphate (PMP) into pyridoxal 5'-phosphate (PLP). This chain is Pyridoxine/pyridoxamine 5'-phosphate oxidase, found in Cupriavidus pinatubonensis (strain JMP 134 / LMG 1197) (Cupriavidus necator (strain JMP 134)).